The following is a 288-amino-acid chain: GCN5-related N-acetyltransferase 6, chloroplastic (288 aa).

A chloroplast-targeting transit peptide spans 1 to 111 (MSTISIHRTE…YWTAAWLRAE (111 aa)). Residues 151-288 (SCIVAVKKEE…DDTYLLQYTS (138 aa)) enclose the N-acetyltransferase domain. Acetyl-CoA contacts are provided by residues 215-217 (LCV), 223-228 (RQGIAC), 254-256 (NSV), and Tyr-261. The active-site Proton donor is the Tyr-261.

The protein belongs to the acetyltransferase family. GNAT subfamily. As to quaternary structure, oligomer. In terms of processing, autoacetylated. Expressed in green tissues and in roots.

Its subcellular location is the plastid. The protein localises to the chloroplast. It localises to the cytoplasm. The protein resides in the perinuclear region. The catalysed reaction is an N-terminal L-alpha-aminoacyl-[protein] + acetyl-CoA = N-terminal N(alpha)-acetyl-L-alpha-aminoacyl-[protein] + CoA + H(+). It catalyses the reaction L-lysyl-[protein] + acetyl-CoA = N(6)-acetyl-L-lysyl-[protein] + CoA + H(+). The enzyme catalyses N-terminal L-alanyl-[protein] + acetyl-CoA = N-terminal N(alpha)-acetyl-L-alanyl-[protein] + CoA + H(+). It carries out the reaction N-terminal L-seryl-[protein] + acetyl-CoA = N-terminal N(alpha)-acetyl-L-seryl-[protein] + CoA + H(+). The catalysed reaction is N-terminal L-threonyl-[protein] + acetyl-CoA = N-terminal N(alpha)-acetyl-L-threonyl-[protein] + CoA + H(+). It catalyses the reaction N-terminal L-methionyl-[protein] + acetyl-CoA = N-terminal N(alpha)-acetyl-L-methionyl-[protein] + CoA + H(+). The enzyme catalyses N-terminal L-valyl-[protein] + acetyl-CoA = N-terminal N(alpha)-acetyl-L-valyl-[protein] + CoA + H(+). In terms of biological role, protein acetyltransferase with dual specificity triggering both N-alpha-acetylation (NTA), with a large spectrum of modified N-termini, including methionine, alanine, serine, threonine and to a lower extent valine as substrates, and epsilon-lysine acetylation (KA). The chain is GCN5-related N-acetyltransferase 6, chloroplastic from Arabidopsis thaliana (Mouse-ear cress).